We begin with the raw amino-acid sequence, 215 residues long: 3-isopropylmalate dehydratase small subunit (215 aa).

The protein belongs to the LeuD family. LeuD type 1 subfamily. As to quaternary structure, heterodimer of LeuC and LeuD.

The enzyme catalyses (2R,3S)-3-isopropylmalate = (2S)-2-isopropylmalate. It functions in the pathway amino-acid biosynthesis; L-leucine biosynthesis; L-leucine from 3-methyl-2-oxobutanoate: step 2/4. Catalyzes the isomerization between 2-isopropylmalate and 3-isopropylmalate, via the formation of 2-isopropylmaleate. In Saccharophagus degradans (strain 2-40 / ATCC 43961 / DSM 17024), this protein is 3-isopropylmalate dehydratase small subunit.